Reading from the N-terminus, the 212-residue chain is ER lumen protein-retaining receptor 2 (212 aa).

The Lumenal portion of the chain corresponds to 1–4 (MNIF). Residues 5-24 (RLTGDLSHLAAIVILLLKIW) form a helical membrane-spanning segment. Over 25–32 (KTRSCAGI) the chain is Cytoplasmic. The helical transmembrane segment at 33–52 (SGKSQLLFALVFTTRYLDLF) threads the bilayer. The segment at 47-48 (RY) is interaction with the K-D-E-L motif on target proteins. At 53-58 (TSFISL) the chain is on the lumenal side. The helical transmembrane segment at 59 to 79 (YNTSMKVIYLACSYATVYLIY) threads the bilayer. The Cytoplasmic segment spans residues 80 to 92 (LKFKATYDGNHDT). The helical transmembrane segment at 93–110 (FRVEFLVVPVGGLSFLVN) threads the bilayer. Residues 111–116 (HDFSPL) are Lumenal-facing. The helical transmembrane segment at 117–135 (EILWTFSIYLESVAILPQL) threads the bilayer. The Cytoplasmic portion of the chain corresponds to 136–149 (FMISKTGEAETITT). Residues 150–168 (HYLFFLGLYRALYLVNWIW) form a helical membrane-spanning segment. Residues 159-169 (RALYLVNWIWR) form an interaction with the K-D-E-L motif on target proteins region. The Lumenal segment spans residues 169 to 178 (RFYFEGFFDL). The helical transmembrane segment at 179–199 (IAVVAGVVQTILYCDFFYLYI) threads the bilayer. Topologically, residues 200 to 212 (TKVLKGKKLSLPA) are cytoplasmic. Residues 204 to 207 (KGKK) are important for recycling of cargo proteins with the sequence motif K-D-E-L from the Golgi to the endoplasmic reticulum.

The protein belongs to the ERD2 family.

It localises to the endoplasmic reticulum membrane. The protein resides in the golgi apparatus membrane. Its subcellular location is the cytoplasmic vesicle. The protein localises to the COPI-coated vesicle membrane. In terms of biological role, membrane receptor that binds the K-D-E-L sequence motif in the C-terminal part of endoplasmic reticulum resident proteins and maintains their localization in that compartment by participating to their vesicle-mediated recycling back from the Golgi. Binding is pH dependent, and is optimal at pH 5-5.4. This chain is ER lumen protein-retaining receptor 2 (KDELR2), found in Homo sapiens (Human).